The sequence spans 401 residues: Diphosphomevalonate decarboxylase (401 aa).

N-acetylalanine is present on A2. (R)-5-diphosphomevalonate contacts are provided by residues 24 to 27 (YWGK), R79, 157 to 162 (SGSACR), and T213. The disordered stretch occupies residues 382–401 (VLDDPHHHLLGPDGLPQRDL).

Belongs to the diphosphomevalonate decarboxylase family. As to quaternary structure, homodimer.

The protein resides in the cytoplasm. The catalysed reaction is (R)-5-diphosphomevalonate + ATP = isopentenyl diphosphate + ADP + phosphate + CO2. Its pathway is steroid biosynthesis; cholesterol biosynthesis. Its function is as follows. Catalyzes the ATP dependent decarboxylation of (R)-5-diphosphomevalonate to form isopentenyl diphosphate (IPP). Functions in the mevalonate (MVA) pathway leading to isopentenyl diphosphate (IPP), a key precursor for the biosynthesis of isoprenoids and sterol synthesis. The chain is Diphosphomevalonate decarboxylase (Mvd) from Rattus norvegicus (Rat).